Consider the following 331-residue polypeptide: UDP-GalNAc:beta-1,3-N-acetylgalactosaminyltransferase 1 (331 aa).

At 1–20 (MASALWTVLPSRMSLRSLKW) the chain is on the cytoplasmic side. Residues 21-43 (SLLLLSLLSFFVMWYLSLPHYNV) traverse the membrane as a helical; Signal-anchor for type II membrane protein segment. The Lumenal segment spans residues 44-331 (IERVNWMYFY…VMLRNTTCHY (288 aa)). N-linked (GlcNAc...) asparagine glycosylation is found at N72, N154, N198, N212, and N326.

This sequence belongs to the glycosyltransferase 31 family. Requires Mg(2+) as cofactor. As to expression, higher expression in heart and brain, and to a lesser extent in lung, placenta, kidney and testis. Lower expression in liver, spleen and stomach. No expression in skeletal muscle.

The protein resides in the golgi apparatus membrane. It carries out the reaction a globoside Gb3Cer (d18:1(4E)) + UDP-N-acetyl-alpha-D-galactosamine = a globoside Gb4Cer (d18:1(4E)) + UDP + H(+). The protein operates within protein modification; protein glycosylation. Transfers N-acetylgalactosamine onto globotriaosylceramide. Plays a critical role in preimplantation stage embryonic development. The polypeptide is UDP-GalNAc:beta-1,3-N-acetylgalactosaminyltransferase 1 (Homo sapiens (Human)).